Reading from the N-terminus, the 418-residue chain is Phosphopentomutase (418 aa).

Asp10, Asp297, His302, Asp338, His339, and His350 together coordinate Mn(2+).

The protein belongs to the phosphopentomutase family. Mn(2+) is required as a cofactor.

The protein resides in the cytoplasm. The enzyme catalyses 2-deoxy-alpha-D-ribose 1-phosphate = 2-deoxy-D-ribose 5-phosphate. It catalyses the reaction alpha-D-ribose 1-phosphate = D-ribose 5-phosphate. It participates in carbohydrate degradation; 2-deoxy-D-ribose 1-phosphate degradation; D-glyceraldehyde 3-phosphate and acetaldehyde from 2-deoxy-alpha-D-ribose 1-phosphate: step 1/2. Its function is as follows. Isomerase that catalyzes the conversion of deoxy-ribose 1-phosphate (dRib-1-P) and ribose 1-phosphate (Rib-1-P) to deoxy-ribose 5-phosphate (dRib-5-P) and ribose 5-phosphate (Rib-5-P), respectively. This is Phosphopentomutase from Chromohalobacter salexigens (strain ATCC BAA-138 / DSM 3043 / CIP 106854 / NCIMB 13768 / 1H11).